The following is a 73-amino-acid chain: Translation initiation factor IF-1 (73 aa).

In terms of domain architecture, S1-like spans 1-73 (MAKKDGAIEV…SRGRIVYRYK (73 aa)).

This sequence belongs to the IF-1 family. In terms of assembly, component of the 30S ribosomal translation pre-initiation complex which assembles on the 30S ribosome in the order IF-2 and IF-3, IF-1 and N-formylmethionyl-tRNA(fMet); mRNA recruitment can occur at any time during PIC assembly.

The protein resides in the cytoplasm. Functionally, one of the essential components for the initiation of protein synthesis. Stabilizes the binding of IF-2 and IF-3 on the 30S subunit to which N-formylmethionyl-tRNA(fMet) subsequently binds. Helps modulate mRNA selection, yielding the 30S pre-initiation complex (PIC). Upon addition of the 50S ribosomal subunit IF-1, IF-2 and IF-3 are released leaving the mature 70S translation initiation complex. The chain is Translation initiation factor IF-1 from Mycolicibacterium smegmatis (strain ATCC 700084 / mc(2)155) (Mycobacterium smegmatis).